The chain runs to 66 residues: Large ribosomal subunit protein bL35 (66 aa).

2 stretches are compositionally biased toward basic residues: residues 1–16 (MPKFKTHRASAKRFKK) and 23–45 (KRGHAYTSHRFHGKTKKQRRQLR). Residues 1–66 (MPKFKTHRAS…RIRQMLSQMK (66 aa)) are disordered.

It belongs to the bacterial ribosomal protein bL35 family.

This is Large ribosomal subunit protein bL35 from Lacticaseibacillus casei (strain BL23) (Lactobacillus casei).